A 248-amino-acid polypeptide reads, in one-letter code: Probable transcriptional regulatory protein AZC_0510 (248 aa).

Belongs to the TACO1 family.

It is found in the cytoplasm. This chain is Probable transcriptional regulatory protein AZC_0510, found in Azorhizobium caulinodans (strain ATCC 43989 / DSM 5975 / JCM 20966 / LMG 6465 / NBRC 14845 / NCIMB 13405 / ORS 571).